The chain runs to 371 residues: Zinc transporter ZIP13 (371 aa).

The Lumenal segment spans residues 1–7; the sequence is MPGCPCP. Residues 8–28 traverse the membrane as a helical segment; that stretch reads GCGMAGPRLLFLTALALELLE. Topologically, residues 29–68 are cytoplasmic; the sequence is RAGGSQPALRSRGTATACRLDNKESESWGALLSGERLDTW. A helical membrane pass occupies residues 69–89; that stretch reads ICSLLGSLMVGLSGVFPLLVI. At 90 to 108 the chain is on the lumenal side; it reads PLEMGTMLRSEAGAWRLKQ. A helical membrane pass occupies residues 109–129; the sequence is LLSFALGGLLGNVFLHLLPEA. Over 130 to 149 the chain is Cytoplasmic; sequence WAYTCSASPGGEGQSLQQQQ. Residues 150–170 form a helical membrane-spanning segment; that stretch reads QLGLWVIAGILTFLALEKMFL. The Lumenal segment spans residues 171–235; sequence DSKEEGTSQA…TIDNFTHGLA (65 aa). The helical transmembrane segment at 236-256 threads the bilayer; sequence VAASFLVSKKIGLLTTMAILL. The short motif at 257-262 is the XEXPHE-motif element; it reads HEIPHE. The Cytoplasmic segment spans residues 257–278; the sequence is HEIPHEVGDFAILLRAGFDRWS. The helical transmembrane segment at 279-299 threads the bilayer; the sequence is AAKLQLSTALGGLLGAGFAIC. Topologically, residues 300 to 316 are lumenal; sequence TQSPKGVVGCSPAAEET. The chain crosses the membrane as a helical span at residues 317-337; that stretch reads AAWVLPFTSGGFLYIALVNVL. At 338–349 the chain is on the cytoplasmic side; it reads PDLLEEEDPWRS. The chain crosses the membrane as a helical span at residues 350-370; that stretch reads LQQLLLLCAGIVVMVLFSLFV. A topological domain (lumenal) is located at residue Asp371.

Belongs to the ZIP transporter (TC 2.A.5) family. Homodimer.

The protein localises to the golgi apparatus membrane. The protein resides in the cytoplasmic vesicle membrane. Its subcellular location is the endoplasmic reticulum membrane. It carries out the reaction Zn(2+)(in) = Zn(2+)(out). Functionally, functions as a zinc transporter transporting Zn(2+) from the Golgi apparatus to the cytosol and thus influences the zinc level at least in areas of the cytosol. May regulate beige adipocyte differentiation. This chain is Zinc transporter ZIP13, found in Homo sapiens (Human).